We begin with the raw amino-acid sequence, 138 residues long: Small ribosomal subunit protein uS11c (138 aa).

Positions Met-1–Arg-24 are disordered. Residues Gly-9 to Arg-24 are compositionally biased toward basic residues.

Belongs to the universal ribosomal protein uS11 family. In terms of assembly, part of the 30S ribosomal subunit.

The protein resides in the plastid. Its subcellular location is the chloroplast. The chain is Small ribosomal subunit protein uS11c from Citrus sinensis (Sweet orange).